A 381-amino-acid chain; its full sequence is Beta-lactamase CMY-2 (381 aa).

A signal peptide spans 1-20 (MMKKSLCCALLLTASFSTFA). The Acyl-ester intermediate role is filled by Ser84. Residues Ser84, Gln140, Tyr170, and Asn172 each coordinate a beta-lactam.

It belongs to the class-C beta-lactamase family.

The enzyme catalyses a beta-lactam + H2O = a substituted beta-amino acid. Inhibited by the beta-lactamase-blocking agents sulbactam, tazobactam, avibactam and 3-aminophenylboronic acid (APB). Its function is as follows. Class C beta-lactamase which confers resistance to penicillins and cephalosporins. Has nitrocefin-, cefoxitin- and cefoperazone-hydrolyzing activities. In Klebsiella pneumoniae, this protein is Beta-lactamase CMY-2.